The sequence spans 280 residues: Serine protease 33 (280 aa).

The signal sequence occupies residues 1–22 (MRGVSCLQVLLLLVLGAAGTQG). Positions 37–279 (IVGGRDGRDG…YSPWIQARVS (243 aa)) constitute a Peptidase S1 domain. A disulfide bridge connects residues C62 and C78. Residues H77 and D126 each act as charge relay system in the active site. 3 cysteine pairs are disulfide-bonded: C160–C237, C193–C216, and C227–C255. Residue S231 is the Charge relay system of the active site.

Belongs to the peptidase S1 family. In terms of tissue distribution, predominantly expressed in macrophages. Present in the spleen, small and large intestine, lung and brain (at protein level). Highly expressed in peripheral leukocytes, ovary, retina, spleen and stomach. Moderately expressed in thymus, uterus and platelets, as well as some brain tissues, such as thalamus and fetal brain.

It localises to the secreted. In terms of biological role, serine protease that has amidolytic activity, cleaving its substrates before Arg residues. This chain is Serine protease 33 (PRSS33), found in Homo sapiens (Human).